Here is a 641-residue protein sequence, read N- to C-terminus: Sodium-dependent nutrient amino acid transporter 1 (641 aa).

A disordered region spans residues 1–34 (MELKGVQPSNGSANGNGTTNAASTEKADTEKQTA). The Cytoplasmic segment spans residues 1–38 (MELKGVQPSNGSANGNGTTNAASTEKADTEKQTAERTN). Positions 9 to 24 (SNGSANGNGTTNAAST) are enriched in low complexity. Residues 25–34 (EKADTEKQTA) show a composition bias toward basic and acidic residues. Helical transmembrane passes span 39–59 (WGNG…LGNV), 72–92 (GAFL…MYYL), and 109–129 (SVVP…ICII). 2 N-linked (GlcNAc...) asparagine glycosylation sites follow: Asn-183 and Asn-188. 9 consecutive transmembrane segments (helical) span residues 229-249 (PDWK…LVIM), 258-278 (AAYF…IRAV), 307-327 (AVVQ…MFAS), 341-361 (IVTT…FAIL), 401-421 (LFSV…IVAL), 441-461 (VALI…TPGG), 474-494 (TYVV…VYGL), 516-536 (CWSF…MATI), and 552-572 (IAGW…GLWY).

Belongs to the sodium:neurotransmitter symporter (SNF) (TC 2.A.22) family.

The protein localises to the membrane. Its function is as follows. Unusual broad substrate spectrum amino acid:sodium cotransporter that promotes absorption of the D isomers of essential amino acids. Neutral amino acids are the preferred substrates, especially methionine and phenylalanine. This Drosophila yakuba (Fruit fly) protein is Sodium-dependent nutrient amino acid transporter 1.